The chain runs to 388 residues: Myosin light chain kinase family member 4 (388 aa).

Residues 106 to 361 (VSKTEILGGG…ASEALKHPWL (256 aa)) form the Protein kinase domain. ATP is bound by residues 112–120 (LGGGRFGQV) and Lys135. Asp227 serves as the catalytic Proton acceptor.

Belongs to the protein kinase superfamily. CAMK Ser/Thr protein kinase family.

The enzyme catalyses L-seryl-[protein] + ATP = O-phospho-L-seryl-[protein] + ADP + H(+). The catalysed reaction is L-threonyl-[protein] + ATP = O-phospho-L-threonyl-[protein] + ADP + H(+). This chain is Myosin light chain kinase family member 4 (MYLK4), found in Homo sapiens (Human).